A 613-amino-acid polypeptide reads, in one-letter code: Ribosome-associated molecular chaperone SSB (613 aa).

Residues 1 to 391 are nucleotide binding domain (NBD); that stretch reads MADGVFQGAI…ILTGQSTSDE (391 aa). ATP contacts are provided by residues 16-18, lysine 73, 205-207, 271-278, and glycine 342; these read TTY, GGT, and ERAKRTLS. The inter-domain linker stretch occupies residues 392–402; the sequence is TKDLLLLDVAP. Residues 403–613 form a substrate binding domain (SBD) region; the sequence is LSLGVGMQGD…RVVTKAMSSR (211 aa). A lid domain (SBDalpha) region spans residues 516–612; the sequence is SEDIEKMVNQ…KRVVTKAMSS (97 aa). The Nuclear export signal signature appears at 574-582; sequence IEAALADAL.

Belongs to the heat shock protein 70 family. Ssb-type Hsp70 subfamily. Binds to ribosomes. Binds close to the ribosomal tunnel exit via contacts with both ribosomal proteins and rRNA. Directly interacts with nascent polypeptides. This interaction is dependent on the ribosome-associated complex (RAC). Interacts with SSE1. Interacts with FES1.

The protein localises to the cytoplasm. It carries out the reaction ATP + H2O = ADP + phosphate + H(+). Its function is as follows. Ribosome-bound, Hsp70-type chaperone that assists in the cotranslational folding of newly synthesized proteins in the cytosol. Stimulates folding by interacting with nascent chains, binding to short, largely hydrophobic sequences exposed by unfolded proteins, thereby stabilizing longer, more slowly translated, and aggregation-prone nascent polypeptides and domains that cannot fold stably until fully synthesized. The Hsp70-protein substrate interaction depends on ATP-binding and on allosteric regulation between the NBD and the SBD. The ATP-bound state is characterized by a fast exchange rate of substrate (low affinity state), while in the ADP-bound state exchange is much slower (high affinity state). During the Hsp70 cycle, the chaperone switches between the ATP-bound state (open conformation) and the ADP-bound state (closed conformation) by major conformational rearrangements involving mainly the lid domain. Ssb cooperates with a specific Hsp40/Hsp70 co-chaperone termed the ribosome-associated complex (RAC), which stimulates the ATPase activity of the ribosome-associated pool of Ssbs and switches it to the high affinity substrate binding state. Hsp110 chaperone SSE1 and FES1 act as nucleotide exchange factors that cause substrate release. The sequence is that of Ribosome-associated molecular chaperone SSB (SSB1) from Candida glabrata (strain ATCC 2001 / BCRC 20586 / JCM 3761 / NBRC 0622 / NRRL Y-65 / CBS 138) (Yeast).